Reading from the N-terminus, the 459-residue chain is Bifunctional protein GlmU (459 aa).

Residues 1–229 form a pyrophosphorylase region; sequence MTNYAIILAA…FDESLGVNDR (229 aa). UDP-N-acetyl-alpha-D-glucosamine is bound by residues 8–11, Lys-22, Gln-72, and 77–78; these read LAAG and GT. Asp-102 lines the Mg(2+) pocket. UDP-N-acetyl-alpha-D-glucosamine is bound by residues Gly-139, Glu-154, Asn-169, and Asn-227. Asn-227 contacts Mg(2+). The segment at 230–250 is linker; the sequence is VALATAESVMRRRINQKHMVN. The N-acetyltransferase stretch occupies residues 251–459; that stretch reads GVSFVNPDAT…KRLPHHPQNK (209 aa). Residues Arg-332 and Lys-350 each contribute to the UDP-N-acetyl-alpha-D-glucosamine site. Catalysis depends on His-362, which acts as the Proton acceptor. Tyr-365 and Asn-376 together coordinate UDP-N-acetyl-alpha-D-glucosamine. Acetyl-CoA contacts are provided by residues Ala-379, 385 to 386, Ser-404, Ala-422, and Arg-439; that span reads NY.

It in the N-terminal section; belongs to the N-acetylglucosamine-1-phosphate uridyltransferase family. The protein in the C-terminal section; belongs to the transferase hexapeptide repeat family. Homotrimer. Mg(2+) is required as a cofactor.

It localises to the cytoplasm. It catalyses the reaction alpha-D-glucosamine 1-phosphate + acetyl-CoA = N-acetyl-alpha-D-glucosamine 1-phosphate + CoA + H(+). It carries out the reaction N-acetyl-alpha-D-glucosamine 1-phosphate + UTP + H(+) = UDP-N-acetyl-alpha-D-glucosamine + diphosphate. It functions in the pathway nucleotide-sugar biosynthesis; UDP-N-acetyl-alpha-D-glucosamine biosynthesis; N-acetyl-alpha-D-glucosamine 1-phosphate from alpha-D-glucosamine 6-phosphate (route II): step 2/2. The protein operates within nucleotide-sugar biosynthesis; UDP-N-acetyl-alpha-D-glucosamine biosynthesis; UDP-N-acetyl-alpha-D-glucosamine from N-acetyl-alpha-D-glucosamine 1-phosphate: step 1/1. It participates in bacterial outer membrane biogenesis; LPS lipid A biosynthesis. Its function is as follows. Catalyzes the last two sequential reactions in the de novo biosynthetic pathway for UDP-N-acetylglucosamine (UDP-GlcNAc). The C-terminal domain catalyzes the transfer of acetyl group from acetyl coenzyme A to glucosamine-1-phosphate (GlcN-1-P) to produce N-acetylglucosamine-1-phosphate (GlcNAc-1-P), which is converted into UDP-GlcNAc by the transfer of uridine 5-monophosphate (from uridine 5-triphosphate), a reaction catalyzed by the N-terminal domain. This is Bifunctional protein GlmU from Streptococcus gordonii (strain Challis / ATCC 35105 / BCRC 15272 / CH1 / DL1 / V288).